The primary structure comprises 130 residues: uncharacterized protein (130 aa).

The signal sequence occupies residues 1–20 (MFNCLTKLVILVCLKYVAKA).

This is an uncharacterized protein from Saccharomyces cerevisiae (strain ATCC 204508 / S288c) (Baker's yeast).